The chain runs to 267 residues: GTP cyclohydrolase FolE2 (267 aa).

The protein belongs to the GTP cyclohydrolase IV family.

It catalyses the reaction GTP + H2O = 7,8-dihydroneopterin 3'-triphosphate + formate + H(+). Its pathway is cofactor biosynthesis; 7,8-dihydroneopterin triphosphate biosynthesis; 7,8-dihydroneopterin triphosphate from GTP: step 1/1. Converts GTP to 7,8-dihydroneopterin triphosphate. This Citrifermentans bemidjiense (strain ATCC BAA-1014 / DSM 16622 / JCM 12645 / Bem) (Geobacter bemidjiensis) protein is GTP cyclohydrolase FolE2.